Reading from the N-terminus, the 346-residue chain is Propane 2-monooxygenase, reductase component (346 aa).

One can recognise a 2Fe-2S ferredoxin-type domain in the interval 5–94; sequence HKISFEPVDI…DCEIELLNFD (90 aa). [2Fe-2S] cluster contacts are provided by C39, C44, C46, and C78. One can recognise an FAD-binding FR-type domain in the interval 104–205; it reads IQDVTTKVAA…NGPYGSCTLR (102 aa).

Belongs to the bacterial ring-hydroxylating dioxygenase ferredoxin reductase family. The propane 2-monooxygenase multicomponent enzyme system is composed of an electron transfer component and a monooxygenase component interacting with the effector protein PrmD. The electron transfer component is composed of a reductase (PrmB), and the monooxygenase component is formed by a large subunit (PrmA) and a small subunit (PrmC). It depends on FAD as a cofactor. [2Fe-2S] cluster serves as cofactor.

Functionally, reductase component of the propane 2-monooxygenase multicomponent enzyme system which is involved in the degradation of propane via the O2-dependent hydroxylation of propane. Reductase catalyzes the transfer of electrons from NADH or NADPH to monooxygenase. This is Propane 2-monooxygenase, reductase component from Gordonia sp. (strain TY-5).